A 237-amino-acid chain; its full sequence is MRPSNRTPAQSRPVTITRQFTAHAEGSVLVEFGDTKVLCTASFEEGVPRFLKGQGQGWVTAEYGMLPRSTHSRMQREAARGKQSGRTQEIQRLIGRSLRAAVDMKLLGENTIVIDCDVIQADGGTRTAAITGACVALVDALNWARGKGILKTNPLKFLIAAVSVGIYKGEPICDLEYIEDSAAETDMNVVMTETGKIIEIQGTAEGEPFSHEELLSLLDLAKHGIREIVDIQKASLS.

Phosphate contacts are provided by residues R86 and 124–126 (GTR).

It belongs to the RNase PH family. In terms of assembly, homohexameric ring arranged as a trimer of dimers.

It carries out the reaction tRNA(n+1) + phosphate = tRNA(n) + a ribonucleoside 5'-diphosphate. Functionally, phosphorolytic 3'-5' exoribonuclease that plays an important role in tRNA 3'-end maturation. Removes nucleotide residues following the 3'-CCA terminus of tRNAs; can also add nucleotides to the ends of RNA molecules by using nucleoside diphosphates as substrates, but this may not be physiologically important. Probably plays a role in initiation of 16S rRNA degradation (leading to ribosome degradation) during starvation. In Shewanella pealeana (strain ATCC 700345 / ANG-SQ1), this protein is Ribonuclease PH.